A 295-amino-acid polypeptide reads, in one-letter code: 4-hydroxy-tetrahydrodipicolinate synthase 1 (295 aa).

Threonine 46 lines the pyruvate pocket. Tyrosine 134 acts as the Proton donor/acceptor in catalysis. Residue lysine 162 is the Schiff-base intermediate with substrate of the active site. Valine 204 is a binding site for pyruvate.

Belongs to the DapA family. In terms of assembly, homotetramer; dimer of dimers.

The protein resides in the cytoplasm. The catalysed reaction is L-aspartate 4-semialdehyde + pyruvate = (2S,4S)-4-hydroxy-2,3,4,5-tetrahydrodipicolinate + H2O + H(+). Its pathway is amino-acid biosynthesis; L-lysine biosynthesis via DAP pathway; (S)-tetrahydrodipicolinate from L-aspartate: step 3/4. Catalyzes the condensation of (S)-aspartate-beta-semialdehyde [(S)-ASA] and pyruvate to 4-hydroxy-tetrahydrodipicolinate (HTPA). In Halalkalibacterium halodurans (strain ATCC BAA-125 / DSM 18197 / FERM 7344 / JCM 9153 / C-125) (Bacillus halodurans), this protein is 4-hydroxy-tetrahydrodipicolinate synthase 1.